A 155-amino-acid chain; its full sequence is Interleukin-2 (155 aa).

The first 20 residues, 1-20, serve as a signal peptide directing secretion; the sequence is MYRMQLLSCIALTLALVANG. A glycan (O-linked (GalNAc...) threonine) is linked at Thr23. Cysteines 79 and 127 form a disulfide.

The protein belongs to the IL-2 family.

The protein localises to the secreted. In terms of biological role, cytokine produced by activated CD4-positive helper T-cells and to a lesser extend activated CD8-positive T-cells and natural killer (NK) cells that plays pivotal roles in the immune response and tolerance. Binds to a receptor complex composed of either the high-affinity trimeric IL-2R (IL2RA/CD25, IL2RB/CD122 and IL2RG/CD132) or the low-affinity dimeric IL-2R (IL2RB and IL2RG). Interaction with the receptor leads to oligomerization and conformation changes in the IL-2R subunits resulting in downstream signaling starting with phosphorylation of JAK1 and JAK3. In turn, JAK1 and JAK3 phosphorylate the receptor to form a docking site leading to the phosphorylation of several substrates including STAT5. This process leads to activation of several pathways including STAT, phosphoinositide-3-kinase/PI3K and mitogen-activated protein kinase/MAPK pathways. Functions as a T-cell growth factor and can increase NK-cell cytolytic activity as well. Promotes strong proliferation of activated B-cells and subsequently immunoglobulin production. Plays a pivotal role in regulating the adaptive immune system by controlling the survival and proliferation of regulatory T-cells, which are required for the maintenance of immune tolerance. Moreover, participates in the differentiation and homeostasis of effector T-cell subsets, including Th1, Th2, Th17 as well as memory CD8-positive T-cells. This chain is Interleukin-2 (IL2), found in Capra hircus (Goat).